Consider the following 154-residue polypeptide: NADPH-dependent 7-cyano-7-deazaguanine reductase (154 aa).

Catalysis depends on cysteine 52, which acts as the Thioimide intermediate. Residue aspartate 59 is the Proton donor of the active site. Residues 74–76 (VES) and 93–94 (HE) contribute to the substrate site.

Belongs to the GTP cyclohydrolase I family. QueF type 1 subfamily.

It localises to the cytoplasm. It carries out the reaction 7-aminomethyl-7-carbaguanine + 2 NADP(+) = 7-cyano-7-deazaguanine + 2 NADPH + 3 H(+). Its pathway is tRNA modification; tRNA-queuosine biosynthesis. Functionally, catalyzes the NADPH-dependent reduction of 7-cyano-7-deazaguanine (preQ0) to 7-aminomethyl-7-deazaguanine (preQ1). In Rhizobium rhizogenes (strain K84 / ATCC BAA-868) (Agrobacterium radiobacter), this protein is NADPH-dependent 7-cyano-7-deazaguanine reductase.